Here is a 188-residue protein sequence, read N- to C-terminus: SAYSvFN domain-containing protein 1 (188 aa).

The span at 1 to 10 shows a compositional bias: basic and acidic residues; it reads MEQRLAEFRE. 2 disordered regions span residues 1–43 and 60–80; these read MEQR…ATPK and AIAQ…PEST. The Cytoplasmic portion of the chain corresponds to 1-100; sequence MEQRLAEFRE…SFLTNITFLK (100 aa). 2 stretches are compositionally biased toward low complexity: residues 22 to 43 and 60 to 75; these read STSS…ATPK and AIAQ…AGQQ. Residues 86–100 are middle helical (MH); sequence SSCRQSFLTNITFLK. Residues 101 to 121 constitute an intramembrane region (helical); sequence VLLWLVLLGLFVELEFGLAYF. Topologically, residues 122 to 188 are cytoplasmic; sequence VLSMFYWMYV…RTSPSCSSYP (67 aa).

This sequence belongs to the SAYSD1 family. As to quaternary structure, associates (via N-terminus) with ribosomes. As to expression, enriched in testis; predominantly expressed in round and elongating spermatids.

The protein resides in the endoplasmic reticulum membrane. It is found in the cytoplasmic vesicle membrane. Ufmylation 'reader' component of a translocation-associated quality control pathway, a mechanism that takes place when a ribosome has stalled during translation, and which is required to degrade clogged substrates. Specifically recognizes and binds ufmylated ribosomes when a ribosome has stalled, promoting the transport of stalled nascent chain via the TRAPP complex to lysosomes for degradation. This chain is SAYSvFN domain-containing protein 1, found in Mus musculus (Mouse).